A 262-amino-acid polypeptide reads, in one-letter code: Flap endonuclease Xni (262 aa).

Residue Asp-105 coordinates Mg(2+). One can recognise a 5'-3' exonuclease domain in the interval 164–251; that stretch reads SQFLDLMALA…NINLKDFRAN (88 aa). Residues Leu-172, Ala-173, Pro-181, Ile-183, and Ile-186 each coordinate K(+). Residues 185-190 form an interaction with DNA region; it reads GIGPKS.

It belongs to the Xni family. Mg(2+) serves as cofactor. It depends on K(+) as a cofactor.

In terms of biological role, has flap endonuclease activity. During DNA replication, flap endonucleases cleave the 5'-overhanging flap structure that is generated by displacement synthesis when DNA polymerase encounters the 5'-end of a downstream Okazaki fragment. This chain is Flap endonuclease Xni, found in Shewanella putrefaciens (strain CN-32 / ATCC BAA-453).